Consider the following 154-residue polypeptide: Transcriptional repressor NrdR (154 aa).

A zinc finger spans residues 3 to 34 (CPFCGANDTKVIDSRLVAEGEQVRRRRECLAC). The 91-residue stretch at 49–139 (PRLIKQDGSR…VYRRFQDLNE (91 aa)) folds into the ATP-cone domain.

This sequence belongs to the NrdR family. Zn(2+) serves as cofactor.

Its function is as follows. Negatively regulates transcription of bacterial ribonucleotide reductase nrd genes and operons by binding to NrdR-boxes. The sequence is that of Transcriptional repressor NrdR from Pseudomonas syringae pv. tomato (strain ATCC BAA-871 / DC3000).